The following is a 366-amino-acid chain: Methylthioribose-1-phosphate isomerase (366 aa).

The Proton donor role is filled by D260.

This sequence belongs to the eIF-2B alpha/beta/delta subunits family. MtnA subfamily.

The protein localises to the cytoplasm. It is found in the nucleus. The catalysed reaction is 5-(methylsulfanyl)-alpha-D-ribose 1-phosphate = 5-(methylsulfanyl)-D-ribulose 1-phosphate. It participates in amino-acid biosynthesis; L-methionine biosynthesis via salvage pathway; L-methionine from S-methyl-5-thio-alpha-D-ribose 1-phosphate: step 1/6. Its function is as follows. Catalyzes the interconversion of methylthioribose-1-phosphate (MTR-1-P) into methylthioribulose-1-phosphate (MTRu-1-P). The protein is Methylthioribose-1-phosphate isomerase of Caenorhabditis elegans.